The chain runs to 176 residues: Large ribosomal subunit protein uL10 (176 aa).

The protein belongs to the universal ribosomal protein uL10 family. In terms of assembly, part of the ribosomal stalk of the 50S ribosomal subunit. The N-terminus interacts with L11 and the large rRNA to form the base of the stalk. The C-terminus forms an elongated spine to which L12 dimers bind in a sequential fashion forming a multimeric L10(L12)X complex.

In terms of biological role, forms part of the ribosomal stalk, playing a central role in the interaction of the ribosome with GTP-bound translation factors. The sequence is that of Large ribosomal subunit protein uL10 (rplJ) from Streptomyces antibioticus.